Consider the following 344-residue polypeptide: Geranylgeranyl pyrophosphate synthase 10, mitochondrial (344 aa).

The N-terminal 40 residues, 1–40, are a transit peptide targeting the mitochondrion; the sequence is MENREVFVYIVISIFRSLQFLFWRFRPRYNDVTSALTRPL. Isopentenyl diphosphate-binding residues include Lys-91, Arg-94, and His-123. Asp-130 and Asp-136 together coordinate Mg(2+). Arg-141 provides a ligand contact to dimethylallyl diphosphate. Arg-142 is an isopentenyl diphosphate binding site. Residues Lys-229, Thr-230, Gln-267, Lys-284, and Lys-294 each coordinate dimethylallyl diphosphate.

It belongs to the FPP/GGPP synthase family. In terms of assembly, monomer. Mg(2+) is required as a cofactor.

It is found in the mitochondrion. It carries out the reaction isopentenyl diphosphate + dimethylallyl diphosphate = (2E)-geranyl diphosphate + diphosphate. The enzyme catalyses isopentenyl diphosphate + (2E)-geranyl diphosphate = (2E,6E)-farnesyl diphosphate + diphosphate. The catalysed reaction is isopentenyl diphosphate + (2E,6E)-farnesyl diphosphate = (2E,6E,10E)-geranylgeranyl diphosphate + diphosphate. It participates in isoprenoid biosynthesis; farnesyl diphosphate biosynthesis; farnesyl diphosphate from geranyl diphosphate and isopentenyl diphosphate: step 1/1. It functions in the pathway isoprenoid biosynthesis; geranyl diphosphate biosynthesis; geranyl diphosphate from dimethylallyl diphosphate and isopentenyl diphosphate: step 1/1. Its pathway is isoprenoid biosynthesis; geranylgeranyl diphosphate biosynthesis; geranylgeranyl diphosphate from farnesyl diphosphate and isopentenyl diphosphate: step 1/1. Catalyzes the trans-addition of the three molecules of IPP onto DMAPP to form geranylgeranyl pyrophosphate. The sequence is that of Geranylgeranyl pyrophosphate synthase 10, mitochondrial from Arabidopsis thaliana (Mouse-ear cress).